We begin with the raw amino-acid sequence, 339 residues long: Putative ABC transporter ATP-binding protein MG467 homolog (339 aa).

Positions 41–87 (KKTKKAKPAKVKKVKEPKAKAVKPEQVKPTKTTKAPKPKKPKKQGGL) are disordered. The segment covering 42 to 53 (KTKKAKPAKVKK) has biased composition (basic residues). Positions 54–68 (VKEPKAKAVKPEQVK) are enriched in basic and acidic residues. Residues 74-83 (KAPKPKKPKK) show a composition bias toward basic residues. Residues 112–338 (ISIDKMWKHV…IVSNELVRPL (227 aa)) form the ABC transporter domain. 150–157 (GPSGSGKT) serves as a coordination point for ATP.

The protein belongs to the ABC transporter superfamily.

This Mycoplasma pneumoniae (strain ATCC 29342 / M129 / Subtype 1) (Mycoplasmoides pneumoniae) protein is Putative ABC transporter ATP-binding protein MG467 homolog.